Reading from the N-terminus, the 131-residue chain is Phosphoribosyl-AMP cyclohydrolase (131 aa).

Asp-78 is a binding site for Mg(2+). Cys-79 serves as a coordination point for Zn(2+). Mg(2+)-binding residues include Asp-80 and Asp-82. Zn(2+) is bound by residues Cys-96 and Cys-103.

Belongs to the PRA-CH family. Homodimer. It depends on Mg(2+) as a cofactor. The cofactor is Zn(2+).

It localises to the cytoplasm. The catalysed reaction is 1-(5-phospho-beta-D-ribosyl)-5'-AMP + H2O = 1-(5-phospho-beta-D-ribosyl)-5-[(5-phospho-beta-D-ribosylamino)methylideneamino]imidazole-4-carboxamide. It functions in the pathway amino-acid biosynthesis; L-histidine biosynthesis; L-histidine from 5-phospho-alpha-D-ribose 1-diphosphate: step 3/9. Its function is as follows. Catalyzes the hydrolysis of the adenine ring of phosphoribosyl-AMP. The protein is Phosphoribosyl-AMP cyclohydrolase of Neisseria gonorrhoeae (strain ATCC 700825 / FA 1090).